The chain runs to 360 residues: Melanoma-associated antigen B16 (360 aa).

The segment at 1–118 (MSQKNPEYAA…GNSVIPPDQP (118 aa)) is disordered. Positions 9-19 (AADHDHTREEM) are enriched in basic and acidic residues. The segment covering 63 to 98 (CSSSQLLTASNQEDPAYETPSTSRGLQHPYVSSSES) has biased composition (polar residues). Residues 125–324 (IDGKVNFLVN…TVFPSQYEEA (200 aa)) form the MAGE domain. The interval 340 to 360 (AGPSSASGESSSDMGSNVPHI) is disordered. The span at 341–360 (GPSSASGESSSDMGSNVPHI) shows a compositional bias: low complexity.

This Rattus norvegicus (Rat) protein is Melanoma-associated antigen B16 (Mageb16).